Consider the following 175-residue polypeptide: Ribosome maturation factor RimM (175 aa).

The 77-residue stretch at 96-172 (PDTYYDHQLE…LIEIDPPDGL (77 aa)) folds into the PRC barrel domain.

The protein belongs to the RimM family. Binds ribosomal protein uS19.

It localises to the cytoplasm. An accessory protein needed during the final step in the assembly of 30S ribosomal subunit, possibly for assembly of the head region. Essential for efficient processing of 16S rRNA. May be needed both before and after RbfA during the maturation of 16S rRNA. It has affinity for free ribosomal 30S subunits but not for 70S ribosomes. The polypeptide is Ribosome maturation factor RimM (Mycobacterium avium (strain 104)).